The sequence spans 416 residues: Trifolitoxin-processing protein TfxD (416 aa).

Transmembrane regions (helical) follow at residues 24–44 (MIPN…ALQV), 48–68 (VLIT…LICM), 79–99 (VFAA…ALIA), 114–134 (IAFI…AYCA), 153–173 (SSLI…FAGT), 176–196 (SIIS…LAYA), 230–250 (ASFI…VVAA), 255–275 (IAVF…LAIG), 295–315 (VLIA…VGLI), 322–342 (IFAL…CDGL), and 372–392 (VILA…ALVL).

Its subcellular location is the cell membrane. The actions of the proteins TfxB, TfxD and TfxF are implicated in the processing of the inactive trifolitoxin (TfxA) precursor into the active peptide. The chain is Trifolitoxin-processing protein TfxD (tfxD) from Rhizobium leguminosarum bv. trifolii.